A 309-amino-acid polypeptide reads, in one-letter code: MRHFISVNQLEADEMYQIIRKANELRDRPNQLNRQLFAGNLFFEPSTRTKMSFSVAERKLGVEILDFHTEASSLAKGESLYDTAKTFEAIGANFLVIRHPSDQWISELEQGGKLNIPVINAGSGKEEHPTQCLLDLLTMYQEFGSIKGLKVVIAGDIKHSRVAKSNAMALTKLGAKVIFSAAPGFEDHTLDYPYLTMDEAIEEADVLMLLRIQHERHLHKAETSDYLSLYGLTKERYKKLQDHAILMHPAPINRGVEIDTNLVESEKSRIFKQMSNGVYVRMAIIMHVLSEWGIIHENNLIKRKSLTAI.

Arg-48 and Thr-49 together coordinate carbamoyl phosphate. Lys-76 provides a ligand contact to L-aspartate. The carbamoyl phosphate site is built by Arg-98, His-128, and Gln-131. Positions 161 and 211 each coordinate L-aspartate. The carbamoyl phosphate site is built by Ala-250 and Pro-251.

The protein belongs to the aspartate/ornithine carbamoyltransferase superfamily. ATCase family. Heterododecamer (2C3:3R2) of six catalytic PyrB chains organized as two trimers (C3), and six regulatory PyrI chains organized as three dimers (R2).

It carries out the reaction carbamoyl phosphate + L-aspartate = N-carbamoyl-L-aspartate + phosphate + H(+). The protein operates within pyrimidine metabolism; UMP biosynthesis via de novo pathway; (S)-dihydroorotate from bicarbonate: step 2/3. In terms of biological role, catalyzes the condensation of carbamoyl phosphate and aspartate to form carbamoyl aspartate and inorganic phosphate, the committed step in the de novo pyrimidine nucleotide biosynthesis pathway. In Oceanobacillus iheyensis (strain DSM 14371 / CIP 107618 / JCM 11309 / KCTC 3954 / HTE831), this protein is Aspartate carbamoyltransferase catalytic subunit.